The following is a 311-amino-acid chain: Formimidoylglutamase (311 aa).

Mn(2+) is bound by residues His130, Asp155, His157, Asp159, Cys242, and Asp244.

The protein belongs to the arginase family. It depends on Mn(2+) as a cofactor.

It carries out the reaction N-formimidoyl-L-glutamate + H2O = formamide + L-glutamate. It functions in the pathway amino-acid degradation; L-histidine degradation into L-glutamate; L-glutamate from N-formimidoyl-L-glutamate (hydrolase route): step 1/1. Catalyzes the conversion of N-formimidoyl-L-glutamate to L-glutamate and formamide. The protein is Formimidoylglutamase of Staphylococcus aureus (strain bovine RF122 / ET3-1).